The following is a 1444-amino-acid chain: DNA polymerase III PolC-type (1444 aa).

Residues 428-584 (YCVFDVETTG…FDAEATAYLA (157 aa)) enclose the Exonuclease domain.

This sequence belongs to the DNA polymerase type-C family. PolC subfamily.

It localises to the cytoplasm. The catalysed reaction is DNA(n) + a 2'-deoxyribonucleoside 5'-triphosphate = DNA(n+1) + diphosphate. Its function is as follows. Required for replicative DNA synthesis. This DNA polymerase also exhibits 3' to 5' exonuclease activity. This is DNA polymerase III PolC-type from Listeria innocua serovar 6a (strain ATCC BAA-680 / CLIP 11262).